Consider the following 252-residue polypeptide: Probable anguibactin biosynthesis thioesterase AngT (252 aa).

Catalysis depends on residues S92 and H229.

This sequence belongs to the thioesterase family.

It functions in the pathway siderophore biosynthesis; anguibactin biosynthesis. Functionally, probable thioesterase. Involved in anguibactin production, but is not essential for virulence or iron transport gene expression. The sequence is that of Probable anguibactin biosynthesis thioesterase AngT (angT) from Vibrio anguillarum (strain ATCC 68554 / 775) (Listonella anguillarum).